A 218-amino-acid chain; its full sequence is Lactosylceramide 4-alpha-galactosyltransferase (218 aa).

The DXD motif motif lies at 57-59 (DTD).

The protein belongs to the glycosyltransferase 32 family.

It localises to the golgi apparatus membrane. The enzyme catalyses a beta-D-Gal-(1-&gt;4)-beta-D-Glc-(1&lt;-&gt;1)-Cer(d18:1(4E)) + UDP-alpha-D-galactose = a globoside Gb3Cer (d18:1(4E)) + UDP + H(+). It catalyses the reaction a beta-D-Gal-(1&lt;-&gt;1')-ceramide + UDP-alpha-D-galactose = alpha-D-Gal-(1-&gt;4)-beta-D-Gal-(1&lt;-&gt;1')-Cer + UDP + H(+). The protein operates within glycolipid biosynthesis. Its function is as follows. Catalyzes the transfer of galactose from UDP-alpha-D-galactose to lactosylceramide/beta-D-galactosyl-(1-&gt;4)-beta-D-glucosyl-(1&lt;-&gt;1)-ceramide(d18:1(4E)) to produce globotriaosylceramide/globoside Gb3Cer (d18:1(4E)). Also able to transfer galactose to galactosylceramide/beta-D-Gal-(1&lt;-&gt;1')-Cer. Globoside Gb3Cer is a glycosphingolipid of the globo serie, one of the major types of neutral root structures of glycosphingolipids, that constitute a significant portion of mammalian cell membranes. This Pongo pygmaeus (Bornean orangutan) protein is Lactosylceramide 4-alpha-galactosyltransferase (A4GALT).